Here is a 153-residue protein sequence, read N- to C-terminus: uncharacterized protein (153 aa).

Positions 1 to 88 are disordered; sequence MDKDRPGLPA…VPPPQLDHPG (88 aa).

This is an uncharacterized protein from Epstein-Barr virus (strain P3HR-1) (HHV-4).